Reading from the N-terminus, the 341-residue chain is Diguanylate cyclase DgcP (341 aa).

One can recognise a GAF domain in the interval 18–154 (SLESLVRQLL…LFAGLIAQYI (137 aa)). The 134-residue stretch at 204–337 (HKIMIAFIDL…KQKTPFVAHP (134 aa)) folds into the GGDEF domain. Position 212 (Asp212) interacts with Mg(2+). Residues Asn220, His225, and Asp229 each contribute to the substrate site. Asp255 contacts Mg(2+). Asp255 serves as the catalytic Proton acceptor.

As to quaternary structure, homodimer. The cofactor is Mg(2+).

It catalyses the reaction 2 GTP = 3',3'-c-di-GMP + 2 diphosphate. Its pathway is purine metabolism; 3',5'-cyclic di-GMP biosynthesis. Its function is as follows. Catalyzes the synthesis of cyclic-di-GMP (c-di-GMP) via the condensation of 2 GTP molecules. Cyclic-di-GMP is a second messenger which controls cell surface-associated traits in bacteria. The chain is Diguanylate cyclase DgcP from Escherichia coli (strain K12).